Here is a 149-residue protein sequence, read N- to C-terminus: Glutamate mutase sigma subunit (149 aa).

The 138-residue stretch at 3–140 (KATLVIGVIG…AHDINQRHDV (138 aa)) folds into the B12-binding domain. Adenosylcob(III)alamin-binding positions include 13-17 (ADCHA), H16, 61-63 (SSI), and 93-97 (NLVVG).

It belongs to the methylaspartate mutase GlmS subunit family. In terms of assembly, heterotetramer composed of 2 epsilon subunits (GlmE) and 2 sigma subunits (GlmS). GlmE exists as a homodimer and GlmS as a monomer. Requires adenosylcob(III)alamin as cofactor.

It catalyses the reaction (2S,3S)-3-methyl-L-aspartate = L-glutamate. It participates in amino-acid degradation; L-glutamate degradation via mesaconate pathway; acetate and pyruvate from L-glutamate: step 1/4. Functionally, catalyzes the carbon skeleton rearrangement of L-glutamate to L-threo-3-methylaspartate ((2S,3S)-3-methylaspartate). In Escherichia coli O157:H7, this protein is Glutamate mutase sigma subunit.